Consider the following 559-residue polypeptide: Formate--tetrahydrofolate ligase (559 aa).

67–74 is an ATP binding site; it reads TPAGEGKS.

It belongs to the formate--tetrahydrofolate ligase family.

The catalysed reaction is (6S)-5,6,7,8-tetrahydrofolate + formate + ATP = (6R)-10-formyltetrahydrofolate + ADP + phosphate. It participates in one-carbon metabolism; tetrahydrofolate interconversion. The sequence is that of Formate--tetrahydrofolate ligase from Lactobacillus delbrueckii subsp. bulgaricus (strain ATCC 11842 / DSM 20081 / BCRC 10696 / JCM 1002 / NBRC 13953 / NCIMB 11778 / NCTC 12712 / WDCM 00102 / Lb 14).